The sequence spans 280 residues: Ycf3-interacting protein 1, chloroplastic (280 aa).

The transit peptide at 1–62 (MTTQIFQLPL…NNRRFGSLIV (62 aa)) directs the protein to the chloroplast. The interval 75–103 (PVPLTLEQQEKEKQNRDDEEDEIDEGDVD) is disordered. Residues 91-103 (DDEEDEIDEGDVD) are compositionally biased toward acidic residues. A helical transmembrane segment spans residues 255–275 (ALYFVSALPVIIGISVVLILF).

This sequence belongs to the Y3IP1/CEST family. Interacts with Ycf3. As to expression, expressed in cotyledons, rosette and cauline leaves, stems and sepals.

The protein localises to the plastid. The protein resides in the chloroplast thylakoid membrane. Functionally, nuclear genome-encoded factor that participates in photosystem I (PSI) biogenesis. Cooperates with the plastid genome-encoded protein PSI assembly Ycf3 in the assembly of stable PSI units in the thylakoid membrane. Involved in light-induced chloroplast development and growth. Involved in the plant response to abiotic and photooxidative stresses. May be involved in the suppression of photooxidative damage. This chain is Ycf3-interacting protein 1, chloroplastic, found in Arabidopsis thaliana (Mouse-ear cress).